Reading from the N-terminus, the 59-residue chain is MDKTRAQEIISSPNMISVTYNGKEIYIENVNENTQTANIHLLNKPDKKQEVPLNNLVEH.

This sequence belongs to the SspH family.

It localises to the spore core. This Alkaliphilus metalliredigens (strain QYMF) protein is Small, acid-soluble spore protein H.